Here is a 345-residue protein sequence, read N- to C-terminus: MSLTLDDFDYLLPPELIAQAPLAERCASRLLVLDGERLDDRGFCDLPELVQPGDLLVFNDTRVIHARLYGTKETGGHIEVLIERAIGPHEALAQVRASKSPRAGSRLRLADAFDVTVLGRVGEFFHLRFPDSHDVLDLLEHHGKLPLPPYIDRSADEHDESRYQTVYARERGSVAAPTAGLHFDQPMLAELAKKGVHGAWLTLHVGAGTFQPVRVNDLGEHRMHRERYVIPQETVAAIAATRAAGRRVIAVGTTSLRALEGAAQDGPLEAGTGETELFILPGYRFQVVDALITNFHLPKSTLLMLVSAFAGLEPMRRAYTHAVGHSYRFFSYGDAMFITHRNDAI.

Belongs to the QueA family. As to quaternary structure, monomer.

Its subcellular location is the cytoplasm. The catalysed reaction is 7-aminomethyl-7-carbaguanosine(34) in tRNA + S-adenosyl-L-methionine = epoxyqueuosine(34) in tRNA + adenine + L-methionine + 2 H(+). Its pathway is tRNA modification; tRNA-queuosine biosynthesis. In terms of biological role, transfers and isomerizes the ribose moiety from AdoMet to the 7-aminomethyl group of 7-deazaguanine (preQ1-tRNA) to give epoxyqueuosine (oQ-tRNA). In Aromatoleum aromaticum (strain DSM 19018 / LMG 30748 / EbN1) (Azoarcus sp. (strain EbN1)), this protein is S-adenosylmethionine:tRNA ribosyltransferase-isomerase.